The chain runs to 308 residues: Cilia- and flagella-associated protein 73 (308 aa).

Coiled coils occupy residues 34 to 143 (RLLE…LEPC) and 175 to 233 (AALR…WESK).

The protein belongs to the CFAP73 family.

The protein localises to the cytoplasm. It is found in the cytoskeleton. The protein resides in the cilium axoneme. Functionally, may play a role in ciliary/flagellar motility by regulating the assembly and the activity of axonemal inner dynein arm. This Homo sapiens (Human) protein is Cilia- and flagella-associated protein 73.